Here is a 264-residue protein sequence, read N- to C-terminus: Thymidylate synthase (264 aa).

Residue R21 coordinates dUMP. H51 contributes to the (6R)-5,10-methylene-5,6,7,8-tetrahydrofolate binding site. R126 to R127 lines the dUMP pocket. C146 functions as the Nucleophile in the catalytic mechanism. DUMP-binding positions include R166–D169, N177, and H207–Y209. Residue D169 coordinates (6R)-5,10-methylene-5,6,7,8-tetrahydrofolate. A263 contacts (6R)-5,10-methylene-5,6,7,8-tetrahydrofolate.

It belongs to the thymidylate synthase family. Bacterial-type ThyA subfamily. Homodimer.

Its subcellular location is the cytoplasm. The catalysed reaction is dUMP + (6R)-5,10-methylene-5,6,7,8-tetrahydrofolate = 7,8-dihydrofolate + dTMP. The protein operates within pyrimidine metabolism; dTTP biosynthesis. In terms of biological role, catalyzes the reductive methylation of 2'-deoxyuridine-5'-monophosphate (dUMP) to 2'-deoxythymidine-5'-monophosphate (dTMP) while utilizing 5,10-methylenetetrahydrofolate (mTHF) as the methyl donor and reductant in the reaction, yielding dihydrofolate (DHF) as a by-product. This enzymatic reaction provides an intracellular de novo source of dTMP, an essential precursor for DNA biosynthesis. The chain is Thymidylate synthase from Parabacteroides distasonis (strain ATCC 8503 / DSM 20701 / CIP 104284 / JCM 5825 / NCTC 11152).